Here is a 37-residue protein sequence, read N- to C-terminus: Large ribosomal subunit protein bL36 (37 aa).

Positions 11, 14, 27, and 32 each coordinate Zn(2+).

It belongs to the bacterial ribosomal protein bL36 family. As to quaternary structure, part of the 50S ribosomal subunit. Requires Zn(2+) as cofactor.

Functionally, binds the 23S rRNA. The polypeptide is Large ribosomal subunit protein bL36 (rpmJ) (Deinococcus radiodurans (strain ATCC 13939 / DSM 20539 / JCM 16871 / CCUG 27074 / LMG 4051 / NBRC 15346 / NCIMB 9279 / VKM B-1422 / R1)).